The primary structure comprises 167 residues: Large ribosomal subunit protein uL10 (167 aa).

The protein belongs to the universal ribosomal protein uL10 family. Part of the ribosomal stalk of the 50S ribosomal subunit. The N-terminus interacts with L11 and the large rRNA to form the base of the stalk. The C-terminus forms an elongated spine to which L12 dimers bind in a sequential fashion forming a multimeric L10(L12)X complex.

Forms part of the ribosomal stalk, playing a central role in the interaction of the ribosome with GTP-bound translation factors. This chain is Large ribosomal subunit protein uL10, found in Alkaliphilus oremlandii (strain OhILAs) (Clostridium oremlandii (strain OhILAs)).